A 261-amino-acid polypeptide reads, in one-letter code: Cytochrome c oxidase subunit 3 (261 aa).

Residues 1–15 (MTHQTHAYHMVNPSP) are Mitochondrial matrix-facing. A helical transmembrane segment spans residues 16-34 (WPLTGALSALLMTSGLTMW). The Mitochondrial intermembrane portion of the chain corresponds to 35–40 (FHFNST). A helical transmembrane segment spans residues 41-66 (ILLMLGLTTNMLTMYQWWRDIIREST). Topologically, residues 67 to 72 (FQGHHT) are mitochondrial matrix. Residues 73-105 (PVVQKGLRYGMILFIISEVLFFTGFFWAFYHSS) traverse the membrane as a helical segment. The Mitochondrial intermembrane segment spans residues 106–128 (LAPTPELGGCWPPTGIHPLNPLE). Residues 129–152 (VPLLNTSVLLASGVSITWAHHSLM) form a helical membrane-spanning segment. At 153–155 (EGH) the chain is on the mitochondrial matrix side. The chain crosses the membrane as a helical span at residues 156 to 183 (RNHMLQALFITIALGVYFTLLQASEYYE). Residues 184–190 (APFTISD) are Mitochondrial intermembrane-facing. A helical transmembrane segment spans residues 191-223 (GVYGSTFFVATGFHGLHVIIGSTFLIVCFFRQL). Residues 224–232 (KFHFTSSHH) lie on the Mitochondrial matrix side of the membrane. Residues 233-256 (FGFEAAAWYWHFVDVVWLFLYVSI) traverse the membrane as a helical segment. At 257–261 (YWWGS) the chain is on the mitochondrial intermembrane side.

It belongs to the cytochrome c oxidase subunit 3 family. Component of the cytochrome c oxidase (complex IV, CIV), a multisubunit enzyme composed of 14 subunits. The complex is composed of a catalytic core of 3 subunits MT-CO1, MT-CO2 and MT-CO3, encoded in the mitochondrial DNA, and 11 supernumerary subunits COX4I, COX5A, COX5B, COX6A, COX6B, COX6C, COX7A, COX7B, COX7C, COX8 and NDUFA4, which are encoded in the nuclear genome. The complex exists as a monomer or a dimer and forms supercomplexes (SCs) in the inner mitochondrial membrane with NADH-ubiquinone oxidoreductase (complex I, CI) and ubiquinol-cytochrome c oxidoreductase (cytochrome b-c1 complex, complex III, CIII), resulting in different assemblies (supercomplex SCI(1)III(2)IV(1) and megacomplex MCI(2)III(2)IV(2)).

It localises to the mitochondrion inner membrane. The catalysed reaction is 4 Fe(II)-[cytochrome c] + O2 + 8 H(+)(in) = 4 Fe(III)-[cytochrome c] + 2 H2O + 4 H(+)(out). Component of the cytochrome c oxidase, the last enzyme in the mitochondrial electron transport chain which drives oxidative phosphorylation. The respiratory chain contains 3 multisubunit complexes succinate dehydrogenase (complex II, CII), ubiquinol-cytochrome c oxidoreductase (cytochrome b-c1 complex, complex III, CIII) and cytochrome c oxidase (complex IV, CIV), that cooperate to transfer electrons derived from NADH and succinate to molecular oxygen, creating an electrochemical gradient over the inner membrane that drives transmembrane transport and the ATP synthase. Cytochrome c oxidase is the component of the respiratory chain that catalyzes the reduction of oxygen to water. Electrons originating from reduced cytochrome c in the intermembrane space (IMS) are transferred via the dinuclear copper A center (CU(A)) of subunit 2 and heme A of subunit 1 to the active site in subunit 1, a binuclear center (BNC) formed by heme A3 and copper B (CU(B)). The BNC reduces molecular oxygen to 2 water molecules using 4 electrons from cytochrome c in the IMS and 4 protons from the mitochondrial matrix. The polypeptide is Cytochrome c oxidase subunit 3 (MT-CO3) (Tragelaphus strepsiceros (Greater kudu)).